A 102-amino-acid polypeptide reads, in one-letter code: uncharacterized protein (102 aa).

The next 2 membrane-spanning stretches (helical) occupy residues 24–44 and 55–75; these read AFIVPSAIFFFVFYFSLPVLT and IGAVSWAWLFAIAQFAMTWIL.

It localises to the cell membrane. This is an uncharacterized protein from Bacillus subtilis (strain 168).